A 225-amino-acid polypeptide reads, in one-letter code: UPF0758 protein BB3258 (225 aa).

One can recognise an MPN domain in the interval 103–225; that stretch reads ALANPDLVRR…TVSMAAQGHL (123 aa). Residues His174, His176, and Asp187 each contribute to the Zn(2+) site. A JAMM motif motif is present at residues 174 to 187; sequence HNHPGGTAAASAAD.

It belongs to the UPF0758 family.

This Bordetella bronchiseptica (strain ATCC BAA-588 / NCTC 13252 / RB50) (Alcaligenes bronchisepticus) protein is UPF0758 protein BB3258.